The chain runs to 152 residues: Transcriptional regulator MraZ (152 aa).

2 SpoVT-AbrB domains span residues 5–52 and 81–124; these read ASAI…PLHE and AHEV…DEQA.

Belongs to the MraZ family. Forms oligomers.

The protein resides in the cytoplasm. It localises to the nucleoid. This Shewanella sp. (strain MR-7) protein is Transcriptional regulator MraZ.